A 60-amino-acid chain; its full sequence is uncharacterized protein (60 aa).

Residues 27-49 (YYWLVSTARMVLGVTILILILIG) form a helical membrane-spanning segment.

The protein resides in the membrane. This is an uncharacterized protein from Archaeoglobus fulgidus (strain ATCC 49558 / DSM 4304 / JCM 9628 / NBRC 100126 / VC-16).